A 610-amino-acid chain; its full sequence is Elongation factor 4 (610 aa).

Residues 13 to 195 (SHIRNFSIVA…AIVNRLPAPK (183 aa)) enclose the tr-type G domain. GTP is bound by residues 25-30 (DHGKST) and 142-145 (NKID).

Belongs to the TRAFAC class translation factor GTPase superfamily. Classic translation factor GTPase family. LepA subfamily.

It is found in the cell inner membrane. It carries out the reaction GTP + H2O = GDP + phosphate + H(+). Required for accurate and efficient protein synthesis under certain stress conditions. May act as a fidelity factor of the translation reaction, by catalyzing a one-codon backward translocation of tRNAs on improperly translocated ribosomes. Back-translocation proceeds from a post-translocation (POST) complex to a pre-translocation (PRE) complex, thus giving elongation factor G a second chance to translocate the tRNAs correctly. Binds to ribosomes in a GTP-dependent manner. The sequence is that of Elongation factor 4 from Rhizobium leguminosarum bv. trifolii (strain WSM2304).